Reading from the N-terminus, the 231-residue chain is Putative histone H1.9 (231 aa).

The H15 domain maps to 113–177 (QKPSTSKVIL…GSAGSFTLGK (65 aa)). At S135 the chain carries Phosphoserine. A disordered region spans residues 177 to 214 (KKQASKSKLKVKRQRQQRWRSGQRPFGQHRSLLGSKQG). Positions 179–194 (QASKSKLKVKRQRQQR) are enriched in basic residues.

This sequence belongs to the histone H1/H5 family. Expressed exclusively in the testis.

It localises to the nucleus. It is found in the chromosome. Functionally, DNA-binding protein that may be implicated in chromatin remodeling and/or transcriptional regulation during spermiogenesis, the process of spermatid maturation into spermatozoa. In Homo sapiens (Human), this protein is Putative histone H1.9.